The primary structure comprises 280 residues: Pantothenate synthetase (280 aa).

30 to 37 (MGALHRGH) is a binding site for ATP. His37 serves as the catalytic Proton donor. Residue Gln61 participates in (R)-pantoate binding. A beta-alanine-binding site is contributed by Gln61. Residue 148 to 151 (GEKD) participates in ATP binding. Gln154 is a binding site for (R)-pantoate. Residues Val177 and 185–188 (LSSR) each bind ATP.

The protein belongs to the pantothenate synthetase family. In terms of assembly, homodimer.

It localises to the cytoplasm. It catalyses the reaction (R)-pantoate + beta-alanine + ATP = (R)-pantothenate + AMP + diphosphate + H(+). It functions in the pathway cofactor biosynthesis; (R)-pantothenate biosynthesis; (R)-pantothenate from (R)-pantoate and beta-alanine: step 1/1. Functionally, catalyzes the condensation of pantoate with beta-alanine in an ATP-dependent reaction via a pantoyl-adenylate intermediate. The chain is Pantothenate synthetase from Azobacteroides pseudotrichonymphae genomovar. CFP2.